Here is a 292-residue protein sequence, read N- to C-terminus: Ribonuclease T2-like (292 aa).

A signal peptide spans 1–23 (MAKTASAMLFLYLLLSRCLLSHA). Disulfide bonds link cysteine 42–cysteine 61, cysteine 50–cysteine 103, cysteine 60–cysteine 177, cysteine 111–cysteine 169, and cysteine 246–cysteine 280. N-linked (GlcNAc...) asparagine glycosylation is present at asparagine 52. Residues histidine 96, glutamate 162, and histidine 166 contribute to the active site.

It belongs to the RNase T2 family.

Its subcellular location is the vacuole lumen. It localises to the cytoplasm. The catalysed reaction is a ribonucleotidyl-ribonucleotide-RNA + H2O = a 3'-end 3'-phospho-ribonucleotide-RNA + a 5'-end dephospho-ribonucleoside-RNA + H(+). In terms of biological role, rnase which modulates cell survival under stress conditions. Released from the vacuole to the cytoplasm during stress to promote tRNA and rRNA cleavage and to activate separately a downstream pathway that promotes cell death. Involved in cell size, vacuolar morphology and growth at high temperatures and high salt concentration. The sequence is that of Ribonuclease T2-like (RNY1) from Eremothecium gossypii (strain ATCC 10895 / CBS 109.51 / FGSC 9923 / NRRL Y-1056) (Yeast).